A 329-amino-acid chain; its full sequence is Probable tyrosine--tRNA ligase, cytoplasmic (329 aa).

Residue Y35 participates in L-tyrosine binding. Residues 40-48 carry the 'HIGH' region motif; sequence TTGKPHIAY. Positions 162, 166, 169, and 184 each coordinate L-tyrosine. Residues 218–222 carry the 'KMSKS' region motif; the sequence is KMSSS.

It belongs to the class-I aminoacyl-tRNA synthetase family. As to quaternary structure, homodimer.

The protein localises to the cytoplasm. The enzyme catalyses tRNA(Tyr) + L-tyrosine + ATP = L-tyrosyl-tRNA(Tyr) + AMP + diphosphate + H(+). In Vairimorpha ceranae (strain BRL01) (Microsporidian parasite), this protein is Probable tyrosine--tRNA ligase, cytoplasmic.